Reading from the N-terminus, the 272-residue chain is Phosphatidylglycerol--prolipoprotein diacylglyceryl transferase (272 aa).

4 helical membrane passes run 15–35 (LGPLYVHMYSVFMLAGALVLF), 53–73 (AFAVTSLLIPVILGARLWHVV), 90–110 (IWEGGLGFIGGVFSGLICFFV), and 117–137 (VPPFTFLDALAPGILAALCFA). Arg-138 provides a ligand contact to a 1,2-diacyl-sn-glycero-3-phospho-(1'-sn-glycerol). The next 3 membrane-spanning stretches (helical) occupy residues 174–194 (FHPIFLYEIILNVFIIVILLV), 199–219 (VFVKTVFPKGSVFAAFLVLYG), and 237–257 (FGLDLNYVGAAAMIIVGVLIA).

Belongs to the Lgt family.

The protein resides in the cell membrane. The enzyme catalyses L-cysteinyl-[prolipoprotein] + a 1,2-diacyl-sn-glycero-3-phospho-(1'-sn-glycerol) = an S-1,2-diacyl-sn-glyceryl-L-cysteinyl-[prolipoprotein] + sn-glycerol 1-phosphate + H(+). It functions in the pathway protein modification; lipoprotein biosynthesis (diacylglyceryl transfer). In terms of biological role, catalyzes the transfer of the diacylglyceryl group from phosphatidylglycerol to the sulfhydryl group of the N-terminal cysteine of a prolipoprotein, the first step in the formation of mature lipoproteins. The sequence is that of Phosphatidylglycerol--prolipoprotein diacylglyceryl transferase from Tropheryma whipplei (strain Twist) (Whipple's bacillus).